Reading from the N-terminus, the 162-residue chain is Disulfide bond formation protein B (162 aa).

Over 1-10 (MGDWLLRRRG) the chain is Cytoplasmic. Residues 11 to 27 (LALLLVLTLLLNLGALG) traverse the membrane as a helical segment. Topologically, residues 28–45 (LEYLADMPPCPLCWVQRG) are periplasmic. Cys37 and Cys40 are oxidised to a cystine. A helical membrane pass occupies residues 46–62 (VFGLMSLVALVGLVYFP). Topologically, residues 63-68 (RGWGRW) are cytoplasmic. The chain crosses the membrane as a helical span at residues 69 to 86 (PLAGALGLSALTGVIIAL). The Periplasmic portion of the chain corresponds to 87 to 140 (RHLYIQANPDAVSCGMSPEVLAQFLPWWEVLLEILSGTTDCTQVDAVLGVPLPG). Residues Cys100 and Cys127 are joined by a disulfide bond. Residues 141 to 159 (WTLVGYLALGALGLYAVLA) traverse the membrane as a helical segment. At 160 to 162 (RRA) the chain is on the cytoplasmic side.

It belongs to the DsbB family.

It localises to the cell inner membrane. In terms of biological role, required for disulfide bond formation in some periplasmic proteins. Acts by oxidizing the DsbA protein. The polypeptide is Disulfide bond formation protein B (Alkalilimnicola ehrlichii (strain ATCC BAA-1101 / DSM 17681 / MLHE-1)).